The sequence spans 87 residues: Small ribosomal subunit protein bS18 (87 aa).

It belongs to the bacterial ribosomal protein bS18 family. Part of the 30S ribosomal subunit. Forms a tight heterodimer with protein bS6.

Binds as a heterodimer with protein bS6 to the central domain of the 16S rRNA, where it helps stabilize the platform of the 30S subunit. In Campylobacter hominis (strain ATCC BAA-381 / DSM 21671 / CCUG 45161 / LMG 19568 / NCTC 13146 / CH001A), this protein is Small ribosomal subunit protein bS18.